The chain runs to 160 residues: Large ribosomal subunit protein bL19 (160 aa).

Basic and acidic residues-rich tracts occupy residues 1-15 (MTED…KEES) and 28-39 (ATRETKPKDSPS). Residues 1 to 44 (MTEDLKNTSPSKEESNEIEESSKATPKATRETKPKDSPSKTKLS) are disordered.

It belongs to the bacterial ribosomal protein bL19 family.

Functionally, this protein is located at the 30S-50S ribosomal subunit interface and may play a role in the structure and function of the aminoacyl-tRNA binding site. The chain is Large ribosomal subunit protein bL19 from Prochlorococcus marinus (strain SARG / CCMP1375 / SS120).